A 63-amino-acid polypeptide reads, in one-letter code: Protein DsrB (63 aa).

Belongs to the DsrB family.

The sequence is that of Protein DsrB from Yersinia pseudotuberculosis serotype O:3 (strain YPIII).